Here is a 193-residue protein sequence, read N- to C-terminus: Anthranilate synthase component 2 (193 aa).

One can recognise a Glutamine amidotransferase type-1 domain in the interval 3–193 (NILFLDNFDS…QQSIEWLLNR (191 aa)). 57–59 (GPG) provides a ligand contact to L-glutamine. Residue C84 is the Nucleophile; for GATase activity of the active site. Residues Q88 and 134–135 (SL) each bind L-glutamine. Catalysis depends on for GATase activity residues H170 and E172.

As to quaternary structure, heterotetramer consisting of two non-identical subunits: a beta subunit (TrpG) and a large alpha subunit (TrpE).

The enzyme catalyses chorismate + L-glutamine = anthranilate + pyruvate + L-glutamate + H(+). The protein operates within amino-acid biosynthesis; L-tryptophan biosynthesis; L-tryptophan from chorismate: step 1/5. Part of a heterotetrameric complex that catalyzes the two-step biosynthesis of anthranilate, an intermediate in the biosynthesis of L-tryptophan. In the first step, the glutamine-binding beta subunit (TrpG) of anthranilate synthase (AS) provides the glutamine amidotransferase activity which generates ammonia as a substrate that, along with chorismate, is used in the second step, catalyzed by the large alpha subunit of AS (TrpE) to produce anthranilate. In the absence of TrpG, TrpE can synthesize anthranilate directly from chorismate and high concentrations of ammonia. The chain is Anthranilate synthase component 2 (trpG) from Haemophilus influenzae (strain ATCC 51907 / DSM 11121 / KW20 / Rd).